Here is a 429-residue protein sequence, read N- to C-terminus: Glutamate-1-semialdehyde 2,1-aminomutase 2 (429 aa).

The residue at position 267 (Lys267) is an N6-(pyridoxal phosphate)lysine.

The protein belongs to the class-III pyridoxal-phosphate-dependent aminotransferase family. HemL subfamily. As to quaternary structure, homodimer. Pyridoxal 5'-phosphate serves as cofactor.

Its subcellular location is the cytoplasm. The catalysed reaction is (S)-4-amino-5-oxopentanoate = 5-aminolevulinate. The protein operates within porphyrin-containing compound metabolism; protoporphyrin-IX biosynthesis; 5-aminolevulinate from L-glutamyl-tRNA(Glu): step 2/2. In Bacillus subtilis (strain 168), this protein is Glutamate-1-semialdehyde 2,1-aminomutase 2 (gsaB).